The sequence spans 482 residues: Protein DETOXIFICATION 13 (482 aa).

A run of 12 helical transmembrane segments spans residues 39 to 59 (LICFAAPMAAVVIAQFMLQII), 77 to 97 (LASSFCNVTGFSFIVGLSCAL), 124 to 144 (LALVCLPLTLIWLNMETLLVF), 159 to 179 (AACLIPGLFAYAVLQPLTRYF), 188 to 208 (LLITSCFVFCLHVPLCWLLVY), 218 to 238 (ALALSFSNCLYTIILGSLMCF), 268 to 288 (AAMICLEWWSYELIILLSGLL), 297 to 317 (VLSVCLQTTATVYSIHLAIAA), 337 to 357 (IVVYAAMSLAVVEILILSTSL), 381 to 401 (MAPLVSISLILDGLQGVLSGI), 416 to 436 (LGAFYLWGIPIAASLAFWIHL), and 439 to 459 (VGLWIGIQAGAVLQTLLLTLV).

The protein belongs to the multi antimicrobial extrusion (MATE) (TC 2.A.66.1) family.

The protein resides in the membrane. This is Protein DETOXIFICATION 13 from Arabidopsis thaliana (Mouse-ear cress).